Consider the following 108-residue polypeptide: MARNIGLDVPIPETECEDVNCPFHGTLPVRGQVITGKVVSDRMNGTVVVEREFLHYVKKYKRYEKRRSRYHAHSTPCINAGVGDVVRIAECRPLSKTTNFVVVEVMTE.

This sequence belongs to the universal ribosomal protein uS17 family. As to quaternary structure, part of the 30S ribosomal subunit.

One of the primary rRNA binding proteins, it binds specifically to the 5'-end of 16S ribosomal RNA. The polypeptide is Small ribosomal subunit protein uS17 (Methanoculleus marisnigri (strain ATCC 35101 / DSM 1498 / JR1)).